A 182-amino-acid polypeptide reads, in one-letter code: Methyl-CpG-binding domain-containing protein 5 (182 aa).

Disordered stretches follow at residues 1–56 and 80–126; these read MSNG…GTVD and HGTP…KPLN. The MBD domain maps to 25–101; sequence KRATPGDDNW…ENGDSHSEHS (77 aa). Basic and acidic residues predominate over residues 92 to 105; it reads ENGDSHSEHSEGRG. Basic residues predominate over residues 106–115; that stretch reads SARRQTKSNK.

In terms of assembly, homodimer and heterodimer with MBD6. Interacts with DDM1 via its MBD domain. Mostly expressed in flowers, and, to a lower extent, in seedlings, buds, stems and mature seeds, but barely in roots, exclusively in root meristem cells at tips (at protein level).

The protein resides in the nucleus. It is found in the chromosome. Its function is as follows. Transcriptional regulator that binds CpG islands in promoters where the DNA is methylated at position 5 of cytosine within CpG dinucleotides. In addition, binds specifically methylated m(5)CpNpN but not m(5)CpNpG (N is A, T or C). Plays probably a role in gene silencing. In Arabidopsis thaliana (Mouse-ear cress), this protein is Methyl-CpG-binding domain-containing protein 5 (MBD5).